The following is a 262-amino-acid chain: MKKMDIKAQDILNFLTKKYDLSKAEAWDKNGLFFDEQQTINNVQIALDITDDVVNDAILNNANLIISHHPLFTNQDSNDEVNYFVNIDLIEKIKKNKISLIHLHTAFDASANGMSMQMAKRLGLLNLKQDEQNPYLVVGELKLGVSVDYISRIIKQKFLSPIIKYNNVFRLETNLKKIGIIGGSGYKFADDAFNRYQLDMLITSDLKYHNWLDAQAKKQNIIDMNHLSESIFIDVIYDELTKFYGNDANLNKSLSIIKINYI.

Positions 68, 69, 108, 226, and 229 each coordinate a divalent metal cation.

This sequence belongs to the GTP cyclohydrolase I type 2/NIF3 family. Homohexamer.

This is GTP cyclohydrolase 1 type 2 homolog from Ureaplasma parvum serovar 3 (strain ATCC 700970).